A 137-amino-acid chain; its full sequence is Ribosome-binding factor A (137 aa).

This sequence belongs to the RbfA family. In terms of assembly, monomer. Binds 30S ribosomal subunits, but not 50S ribosomal subunits or 70S ribosomes.

The protein resides in the cytoplasm. Its function is as follows. One of several proteins that assist in the late maturation steps of the functional core of the 30S ribosomal subunit. Associates with free 30S ribosomal subunits (but not with 30S subunits that are part of 70S ribosomes or polysomes). Required for efficient processing of 16S rRNA. May interact with the 5'-terminal helix region of 16S rRNA. This Synechococcus sp. (strain ATCC 27144 / PCC 6301 / SAUG 1402/1) (Anacystis nidulans) protein is Ribosome-binding factor A.